The sequence spans 730 residues: Elongation factor 2 (730 aa).

The region spanning 19–260 (KFIRNIGIVA…MVVKHLPDPF (242 aa)) is the tr-type G domain. GTP contacts are provided by residues 28–35 (AHIDHGKT), 94–98 (DTPGH), and 148–151 (NKVD). His-597 bears the Diphthamide mark.

The protein belongs to the TRAFAC class translation factor GTPase superfamily. Classic translation factor GTPase family. EF-G/EF-2 subfamily.

The protein resides in the cytoplasm. Catalyzes the GTP-dependent ribosomal translocation step during translation elongation. During this step, the ribosome changes from the pre-translocational (PRE) to the post-translocational (POST) state as the newly formed A-site-bound peptidyl-tRNA and P-site-bound deacylated tRNA move to the P and E sites, respectively. Catalyzes the coordinated movement of the two tRNA molecules, the mRNA and conformational changes in the ribosome. The sequence is that of Elongation factor 2 from Methanosphaerula palustris (strain ATCC BAA-1556 / DSM 19958 / E1-9c).